A 604-amino-acid chain; its full sequence is Elongation factor 4 (604 aa).

The tr-type G domain occupies 7 to 189 (SRLRNFCIIA…AVVDRIPPPA (183 aa)). GTP is bound by residues 19 to 24 (DHGKST) and 136 to 139 (NKID).

The protein belongs to the TRAFAC class translation factor GTPase superfamily. Classic translation factor GTPase family. LepA subfamily.

It localises to the cell inner membrane. It catalyses the reaction GTP + H2O = GDP + phosphate + H(+). Required for accurate and efficient protein synthesis under certain stress conditions. May act as a fidelity factor of the translation reaction, by catalyzing a one-codon backward translocation of tRNAs on improperly translocated ribosomes. Back-translocation proceeds from a post-translocation (POST) complex to a pre-translocation (PRE) complex, thus giving elongation factor G a second chance to translocate the tRNAs correctly. Binds to ribosomes in a GTP-dependent manner. The chain is Elongation factor 4 from Prochlorococcus marinus (strain MIT 9303).